The sequence spans 141 residues: Large ribosomal subunit protein uL11 (141 aa).

Belongs to the universal ribosomal protein uL11 family. As to quaternary structure, part of the ribosomal stalk of the 50S ribosomal subunit. Interacts with L10 and the large rRNA to form the base of the stalk. L10 forms an elongated spine to which L12 dimers bind in a sequential fashion forming a multimeric L10(L12)X complex. One or more lysine residues are methylated.

In terms of biological role, forms part of the ribosomal stalk which helps the ribosome interact with GTP-bound translation factors. In Listeria innocua serovar 6a (strain ATCC BAA-680 / CLIP 11262), this protein is Large ribosomal subunit protein uL11.